Reading from the N-terminus, the 240-residue chain is Octanoyltransferase (240 aa).

In terms of domain architecture, BPL/LPL catalytic spans 49 to 233; sequence GEAPELVWLL…AFESVFGATR (185 aa). Substrate is bound by residues 87–94, 162–164, and 175–177; these read RGGQVTYH, AIG, and GIA. Cysteine 193 (acyl-thioester intermediate) is an active-site residue.

It belongs to the LipB family.

The protein localises to the cytoplasm. The catalysed reaction is octanoyl-[ACP] + L-lysyl-[protein] = N(6)-octanoyl-L-lysyl-[protein] + holo-[ACP] + H(+). It functions in the pathway protein modification; protein lipoylation via endogenous pathway; protein N(6)-(lipoyl)lysine from octanoyl-[acyl-carrier-protein]: step 1/2. Functionally, catalyzes the transfer of endogenously produced octanoic acid from octanoyl-acyl-carrier-protein onto the lipoyl domains of lipoate-dependent enzymes. Lipoyl-ACP can also act as a substrate although octanoyl-ACP is likely to be the physiological substrate. In Bradyrhizobium sp. (strain BTAi1 / ATCC BAA-1182), this protein is Octanoyltransferase.